Reading from the N-terminus, the 593-residue chain is MATPHLYHRYNSKSSNKNINSSGNSTEVDRFIPKSVSRNAYKSIPMLNGFDISYSELCEKSPSPERLSSPEFFNELRNTGHYESISTTNEFSMSSISSSSESQVTRSGSARASRNDYSKLTKEQKDHRKNIAHSLGFQLPDRVFTFETTSAEILEKNKAIKNCFGPGSCAEIRSTFDFSTLSPDVARYYIANSNARSASPQRQIQRPAKRVKSHIPYRVLDAPCLRNDFYSNLISWSRTTNNVLVGLGCSVYIWSEKEGAVSILDHQYLSEKRDLVTCVSFCPYNTYFIVGTKFGRILLYDQKEFFHSSNTNEKEPVFVFQTESFKGICCLEWFKPGEICKFYVGEENGNVSLFEIKSLHFPIKNWSKRQKLEDENLIGLKLHSTYQAQAQQVCGISLNEHANLLAVGGNDNSCSLWDISDLDKPIKKFVLPHKAAVKAIAFCPWSKSLLATGGGSKDRCIKFWHTSTGTLLDEICTSGQVTSLIWSLRHKQIVATFGFGDTKNPVLITLYSYPKLSKLLEVRSPNPLRVLSAVISPSSMAICVATNDETIRFYELWNDKEEIINEIQESGIYGSNIIEYMEGIETTHNKRIR.

Basic residues predominate over residues 1–11 (MATPHLYHRYN). A disordered region spans residues 1–26 (MATPHLYHRYNSKSSNKNINSSGNST). A compositionally biased stretch (low complexity) spans 12–25 (SKSSNKNINSSGNS). Positions 29-35 (DRFIPKS) match the C-box motif. Low complexity predominate over residues 94-109 (SSISSSSESQVTRSGS). Residues 94-125 (SSISSSSESQVTRSGSARASRNDYSKLTKEQK) form a disordered region. The segment covering 113 to 125 (SRNDYSKLTKEQK) has biased composition (basic and acidic residues). WD repeat units follow at residues 226–264 (RNDF…VSIL), 271–310 (EKRD…HSSN), 323–364 (ESFK…FPIK), 388–427 (AQAQ…KPIK), 432–474 (PHKA…LLDE), and 525–564 (PNPL…EEII).

The protein belongs to the WD repeat CDC20/Fizzy family. In terms of assembly, interacts with CDC16.

In terms of biological role, activator protein that regulates the ubiquitin ligase activity and substrate specificity of the anaphase promoting complex/cyclosome (APC/C). Required for the ubiquitination and subsequent degradation of the B-type cyclin CLB1 by the APC/C complex during meiosis. Required for meiosis I, late meiotic gene expression and spore wall assembly. This is Meiosis-specific APC/C activator protein AMA1 (AMA1) from Saccharomyces cerevisiae (strain ATCC 204508 / S288c) (Baker's yeast).